The primary structure comprises 317 residues: Membrane-associated protein VIPP1, chloroplastic (317 aa).

The stretch at 92–246 forms a coiled coil; sequence EMNDDLTKMR…SQAEALGQLA (155 aa). The segment at 265–317 is disordered; that stretch reads DLAQMKKEISGSSSKGELPPGRTAVSNSGAARPFRDIEIENELNELRKKANEY. Positions 297–317 are enriched in basic and acidic residues; sequence PFRDIEIENELNELRKKANEY.

This sequence belongs to the PspA/Vipp/IM30 family. As to quaternary structure, homomultimer. Complex formation involves interaction via the central alpha-helical domain (71-286). In terms of assembly, (Microbial infection) Interacts with the rice tungro bacilliform virus (RTBV) capsid protein.

Its subcellular location is the plastid. It localises to the chloroplast inner membrane. The protein localises to the chloroplast thylakoid membrane. In terms of biological role, required for plastid vesicle formation and thylakoid membrane biogenesis, but not for functional assembly of thylakoid protein complexes. The polypeptide is Membrane-associated protein VIPP1, chloroplastic (Oryza sativa subsp. japonica (Rice)).